Consider the following 327-residue polypeptide: Ribonucleoside-diphosphate reductase small chain (327 aa).

Aspartate 70, glutamate 101, and histidine 104 together coordinate Fe cation. The active site involves tyrosine 108. Fe cation is bound by residues glutamate 164, glutamate 198, and histidine 201.

The protein belongs to the ribonucleoside diphosphate reductase small chain family. In terms of assembly, heterotetramer composed of a homodimer of the large subunit (R1) and a homodimer of the small subunit (R2). Larger multisubunit protein complex are also active, composed of (R1)n(R2)n. The cofactor is Fe cation.

It catalyses the reaction a 2'-deoxyribonucleoside 5'-diphosphate + [thioredoxin]-disulfide + H2O = a ribonucleoside 5'-diphosphate + [thioredoxin]-dithiol. In terms of biological role, ribonucleoside-diphosphate reductase holoenzyme provides the precursors necessary for viral DNA synthesis. Allows virus growth in non-dividing cells. Catalyzes the biosynthesis of deoxyribonucleotides from the corresponding ribonucleotides. This Ornithodoros (relapsing fever ticks) protein is Ribonucleoside-diphosphate reductase small chain.